The chain runs to 306 residues: Curved DNA-binding protein (306 aa).

Residues 5–69 (DYYAIMGVKP…QRRAEYDQMW (65 aa)) form the J domain.

Its subcellular location is the cytoplasm. It localises to the nucleoid. Functionally, DNA-binding protein that preferentially recognizes a curved DNA sequence. It is probably a functional analog of DnaJ; displays overlapping activities with DnaJ, but functions under different conditions, probably acting as a molecular chaperone in an adaptive response to environmental stresses other than heat shock. Lacks autonomous chaperone activity; binds native substrates and targets them for recognition by DnaK. Its activity is inhibited by the binding of CbpM. The chain is Curved DNA-binding protein from Escherichia coli O157:H7.